Reading from the N-terminus, the 457-residue chain is Secreted effector kinase SteC (457 aa).

Lys256 contacts ATP.

It belongs to the protein kinase superfamily. Post-translationally, autophosphorylated.

It is found in the secreted. The protein localises to the host cytoplasm. Functionally, effector proteins function to alter host cell physiology and promote bacterial survival in host tissues. This protein is a kinase, which is required for SPI-2 T3SS-dependent F-actin meshwork formation in infected host cells. This chain is Secreted effector kinase SteC (steC), found in Salmonella typhimurium (strain LT2 / SGSC1412 / ATCC 700720).